Reading from the N-terminus, the 201-residue chain is Large ribosomal subunit protein bL25 (201 aa).

Belongs to the bacterial ribosomal protein bL25 family. CTC subfamily. As to quaternary structure, part of the 50S ribosomal subunit; part of the 5S rRNA/L5/L18/L25 subcomplex. Contacts the 5S rRNA. Binds to the 5S rRNA independently of L5 and L18.

In terms of biological role, this is one of the proteins that binds to the 5S RNA in the ribosome where it forms part of the central protuberance. The sequence is that of Large ribosomal subunit protein bL25 from Burkholderia lata (strain ATCC 17760 / DSM 23089 / LMG 22485 / NCIMB 9086 / R18194 / 383).